Reading from the N-terminus, the 163-residue chain is Endoribonuclease YbeY (163 aa).

Histidine 126, histidine 130, and histidine 136 together coordinate Zn(2+).

It belongs to the endoribonuclease YbeY family. Requires Zn(2+) as cofactor.

The protein resides in the cytoplasm. Its function is as follows. Single strand-specific metallo-endoribonuclease involved in late-stage 70S ribosome quality control and in maturation of the 3' terminus of the 16S rRNA. This is Endoribonuclease YbeY from Chelativorans sp. (strain BNC1).